The chain runs to 121 residues: Large ribosomal subunit protein uL18c (121 aa).

This sequence belongs to the universal ribosomal protein uL18 family. As to quaternary structure, part of the 50S ribosomal subunit; contacts the 5S rRNA.

It is found in the plastid. The protein localises to the cyanelle. Its function is as follows. Binds 5S rRNA, forms part of the central protuberance of the 50S subunit. This Cyanophora paradoxa protein is Large ribosomal subunit protein uL18c (rpl18).